A 449-amino-acid polypeptide reads, in one-letter code: Glucose-6-phosphate isomerase (449 aa).

Glu291 serves as the catalytic Proton donor. Catalysis depends on residues His312 and Lys426.

The protein belongs to the GPI family.

Its subcellular location is the cytoplasm. The enzyme catalyses alpha-D-glucose 6-phosphate = beta-D-fructose 6-phosphate. The protein operates within carbohydrate biosynthesis; gluconeogenesis. It participates in carbohydrate degradation; glycolysis; D-glyceraldehyde 3-phosphate and glycerone phosphate from D-glucose: step 2/4. Its function is as follows. Catalyzes the reversible isomerization of glucose-6-phosphate to fructose-6-phosphate. The protein is Glucose-6-phosphate isomerase of Streptococcus pyogenes serotype M3 (strain ATCC BAA-595 / MGAS315).